Consider the following 247-residue polypeptide: 3-deoxy-manno-octulosonate cytidylyltransferase (247 aa).

It belongs to the KdsB family.

The protein resides in the cytoplasm. The enzyme catalyses 3-deoxy-alpha-D-manno-oct-2-ulosonate + CTP = CMP-3-deoxy-beta-D-manno-octulosonate + diphosphate. Its pathway is nucleotide-sugar biosynthesis; CMP-3-deoxy-D-manno-octulosonate biosynthesis; CMP-3-deoxy-D-manno-octulosonate from 3-deoxy-D-manno-octulosonate and CTP: step 1/1. It participates in bacterial outer membrane biogenesis; lipopolysaccharide biosynthesis. Functionally, activates KDO (a required 8-carbon sugar) for incorporation into bacterial lipopolysaccharide in Gram-negative bacteria. The protein is 3-deoxy-manno-octulosonate cytidylyltransferase of Methylorubrum populi (strain ATCC BAA-705 / NCIMB 13946 / BJ001) (Methylobacterium populi).